Reading from the N-terminus, the 3122-residue chain is Large tegument protein deneddylase (3122 aa).

The tract at residues 1–248 is deubiquitination activity; sequence MIPAALPHPT…SETYLQDEPF (248 aa). The Peptidase C76 domain occupies 20 to 238; it reads VVTGVRNQFA…TAAALHLYGA (219 aa). Active-site residues include C40, D172, and H174. 2 disordered regions span residues 281 to 367 and 387 to 496; these read GSGP…GDAA and RARY…PPGA. Low complexity predominate over residues 343–353; that stretch reads SAPDAAASGPP. Composition is skewed to basic residues over residues 387 to 400 and 425 to 436; these read RARY…RRRP and KAKKKSAPKKKA. Residues 437-454 are compositionally biased toward low complexity; that stretch reads PVAAEVPASSPTPIAATV. An interaction with inner tegument protein region spans residues 548–578; the sequence is LELCVIFFFERVLAFLIENGARTHTQAGVAG. 3 disordered regions span residues 2494 to 2539, 2570 to 2974, and 3006 to 3059; these read YQRP…ADPG, ASDD…THLP, and SDDE…SQFG. Composition is skewed to pro residues over residues 2578–2590 and 2637–2654; these read TPNP…PPPA and PSPP…PPPA. Positions 2655 to 2667 are enriched in low complexity; it reads FSGSAAAFSAAVP. Positions 2668–2681 are enriched in basic residues; the sequence is RVRRSRRTRAKSRA. Composition is skewed to pro residues over residues 2690 to 2700 and 2710 to 2719; these read GWRPPALPAPV and PDQPPTPESA. Residues 2734–2743 are compositionally biased toward low complexity; sequence ASARGAFPAP. Pro residues-rich tracts occupy residues 2744–2753 and 2775–2785; these read TLAPIPPPPA and SPTPPRGPAAG. Composition is skewed to low complexity over residues 2786-2807 and 2814-2825; these read PPRR…SLPS and HAAAVSAAAAAV. Pro residues predominate over residues 2841 to 2852; it reads SPPPLAPGPVAP. Residues 2853–2867 show a composition bias toward low complexity; that stretch reads SEPLCGWVVPGGPVA. 11 consecutive repeat copies span residues 2891 to 2895, 2896 to 2900, 2901 to 2905, 2906 to 2910, 2911 to 2915, 2916 to 2920, 2921 to 2925, 2926 to 2930, 2931 to 2935, 2936 to 2940, and 2941 to 2945. The segment at 2891–2945 is 11 X 5 AA tandem repeats of P-Q-P-P-L; it reads PQPPLPQPPLPQPPLPQPPLPQPPLPQPPLPQPPLPQPPLPQPPLPQPPLPQPPL. Over residues 2891 to 2947 the composition is skewed to pro residues; sequence PQPPLPQPPLPQPPLPQPPLPQPPLPQPPLPQPPLPQPPLPQPPLPQPPLPQPPLPP. Composition is skewed to polar residues over residues 2950-2959 and 2965-2974; these read RTLTPQSRDS and SPTHTNTHLP. Residues 3006–3020 are compositionally biased toward basic and acidic residues; it reads SDDEHSDADSLRFSD. The span at 3029 to 3045 shows a compositional bias: pro residues; the sequence is PLPPEPHLPPADEPPGP.

This sequence belongs to the herpesviridae large tegument protein family. As to quaternary structure, interacts with host CUL1 and CUL4A; these interactions inhibit the E3 ligase activity of cullins. Interacts with inner tegument protein. Interacts with capsid vertex specific component CVC2. Interacts with the major capsid protein/MCP. In terms of processing, proteolytically processed, possibly into several polypeptides. Enzymatic activity is only detectable following cleavage of the UL36 protein, which occurs late during viral replication.

It is found in the virion tegument. The protein resides in the host cytoplasm. It localises to the host nucleus. It carries out the reaction Thiol-dependent hydrolysis of ester, thioester, amide, peptide and isopeptide bonds formed by the C-terminal Gly of ubiquitin (a 76-residue protein attached to proteins as an intracellular targeting signal).. Its function is as follows. Large tegument protein that plays multiple roles in the viral cycle. During viral entry, remains associated with the capsid while most of the tegument is detached and participates in the capsid transport toward the host nucleus. Plays a role in the routing of the capsid at the nuclear pore complex and subsequent uncoating. Within the host nucleus, acts as a deneddylase and promotes the degradation of nuclear CRLs (cullin-RING ubiquitin ligases) and thereby stabilizes nuclear CRL substrates, while cytoplasmic CRLs remain unaffected. These modifications prevent host cell cycle S-phase progression and create a favorable environment allowing efficient viral genome replication. Participates later in the secondary envelopment of capsids. Indeed, plays a linker role for the association of the outer viral tegument to the capsids together with the inner tegument protein. The sequence is that of Large tegument protein deneddylase from Human herpesvirus 2 (strain HG52) (HHV-2).